A 330-amino-acid chain; its full sequence is Nodulation protein D 2 (330 aa).

Residues 6 to 63 form the HTH lysR-type domain; the sequence is LDLNLLVALDALITERNLSSAARKINLSQPAMSAAVARLRKHFRDELFGMRGRELVLS. A DNA-binding region (H-T-H motif) is located at residues 23–42; it reads LSSAARKINLSQPAMSAAVA. The tract at residues 308-330 is disordered; the sequence is RVTSSPEDAEPPGHFVRSVSPLP.

It belongs to the LysR transcriptional regulatory family.

Its function is as follows. NodD regulates the expression of the nodABCFE genes which encode other nodulation proteins. NodD is also a negative regulator of its own expression. Binds flavonoids as inducers. The protein is Nodulation protein D 2 (nodD2) of Bradyrhizobium diazoefficiens (strain JCM 10833 / BCRC 13528 / IAM 13628 / NBRC 14792 / USDA 110).